The sequence spans 116 residues: UPF0102 protein LA_2381 (116 aa).

This sequence belongs to the UPF0102 family.

The protein is UPF0102 protein LA_2381 of Leptospira interrogans serogroup Icterohaemorrhagiae serovar Lai (strain 56601).